A 269-amino-acid chain; its full sequence is Shikimate dehydrogenase (NADP(+)) (269 aa).

Shikimate contacts are provided by residues 14–16 and threonine 61; that span reads SKS. Lysine 65 (proton acceptor) is an active-site residue. Glutamate 77 contributes to the NADP(+) binding site. Residues asparagine 86 and aspartate 102 each contribute to the shikimate site. Residues 126–130, 150–155, and methionine 213 each bind NADP(+); these read GAGGA and NRTYEK. Tyrosine 215 is a shikimate binding site. Glycine 237 serves as a coordination point for NADP(+).

Belongs to the shikimate dehydrogenase family. In terms of assembly, homodimer.

The enzyme catalyses shikimate + NADP(+) = 3-dehydroshikimate + NADPH + H(+). It functions in the pathway metabolic intermediate biosynthesis; chorismate biosynthesis; chorismate from D-erythrose 4-phosphate and phosphoenolpyruvate: step 4/7. Involved in the biosynthesis of the chorismate, which leads to the biosynthesis of aromatic amino acids. Catalyzes the reversible NADPH linked reduction of 3-dehydroshikimate (DHSA) to yield shikimate (SA). The protein is Shikimate dehydrogenase (NADP(+)) of Aliivibrio fischeri (strain ATCC 700601 / ES114) (Vibrio fischeri).